A 120-amino-acid polypeptide reads, in one-letter code: MAQLAKFDVPEELTNKALEALELARDTGKIKKGTNEATKAIERGNAKLVLIAEDIEPAEIVAHIGPLSEEKKAPYIYIKNQKDLGAASGLGVSCATVAIVDAGKAAEMIQDIAQKLDALK.

This sequence belongs to the eukaryotic ribosomal protein eL8 family. As to quaternary structure, part of the 50S ribosomal subunit. Probably part of the RNase P complex.

It is found in the cytoplasm. Multifunctional RNA-binding protein that recognizes the K-turn motif in ribosomal RNA, the RNA component of RNase P, box H/ACA, box C/D and box C'/D' sRNAs. This is Large ribosomal subunit protein eL8 from Methanosarcina mazei (strain ATCC BAA-159 / DSM 3647 / Goe1 / Go1 / JCM 11833 / OCM 88) (Methanosarcina frisia).